Consider the following 74-residue polypeptide: MKFQVIAAVLLIAFCLCVVVTARMELQDVEDVENGFQKRRSCIDTIPQSRCTAFQCKHSMKYRLSFCRKTCGTC.

The first 22 residues, methionine 1 to alanine 22, serve as a signal peptide directing secretion. Positions arginine 23–arginine 39 are excised as a propeptide. One can recognise a ShKT domain in the interval cysteine 42–cysteine 74. 3 disulfide bridges follow: cysteine 42–cysteine 74, cysteine 51–cysteine 67, and cysteine 56–cysteine 71.

It belongs to the sea anemone type 1 potassium channel toxin family. Type 1a subfamily.

The protein resides in the secreted. The protein localises to the nematocyst. Its function is as follows. Inhibits voltage-gated potassium channels (Kv) with higher potency for Kv1.1/KCNA1 and Kv1.3/KCNA3. The polypeptide is Kappa-stichotoxin-Shd5a (Stichodactyla haddoni (Saddle carpet anemone)).